Here is a 192-residue protein sequence, read N- to C-terminus: NF-kappa-B inhibitor-interacting Ras-like protein 1 (192 aa).

11–18 (GLLSVGKT) is a binding site for GTP. The Effector region signature appears at 35-43 (DCETMEDVY). The interval 58–93 (HLYDTRGLQEGVELPKHYFSFADGFVLVYSVNNLES) is interactions with NFKBIA and NFKBIB. Residues 61-65 (DTRGL) and 120-123 (NKID) each bind GTP. Residues 168–192 (LSQPQSKSSFPLPGRKNKGNSNSEN) are disordered.

This sequence belongs to the small GTPase superfamily. Ras family. KappaB-Ras subfamily. As to quaternary structure, interacts with both NF-kappa-B inhibitor alpha (NFKBIA) and beta (NFKBIB) in vitro. However, it probably only interacts with NFKBIB in vivo. Forms a complex with NFKBIB and NF-kappa-B heterodimer (p50/NFKB1 and p65/RELA). Also interacts with c-Rel (REL). Widely expressed.

Its subcellular location is the cytoplasm. Atypical Ras-like protein that acts as a potent regulator of NF-kappa-B activity by preventing the degradation of NF-kappa-B inhibitor beta (NFKBIB) by most signals, explaining why NFKBIB is more resistant to degradation. May act by blocking phosphorylation of NFKBIB and mediating cytoplasmic retention of p65/RELA NF-kappa-B subunit. It is unclear whether it acts as a GTPase. Both GTP- and GDP-bound forms block phosphorylation of NFKBIB. This Homo sapiens (Human) protein is NF-kappa-B inhibitor-interacting Ras-like protein 1 (NKIRAS1).